A 332-amino-acid chain; its full sequence is Ketol-acid reductoisomerase (NADP(+)) (332 aa).

The KARI N-terminal Rossmann domain occupies 4-184 (ARMYYDEDAD…GGTRAGILET (181 aa)). NADP(+) is bound by residues 27 to 30 (YGSQ), S53, S55, and 85 to 88 (DEVQ). H110 is an active-site residue. G136 contacts NADP(+). Residues 185-330 (TFREEAETDL…ADLRKMMSWL (146 aa)) enclose the KARI C-terminal knotted domain. 4 residues coordinate Mg(2+): D193, E197, E229, and E233. S254 provides a ligand contact to substrate.

Belongs to the ketol-acid reductoisomerase family. Mg(2+) serves as cofactor.

The enzyme catalyses (2R)-2,3-dihydroxy-3-methylbutanoate + NADP(+) = (2S)-2-acetolactate + NADPH + H(+). It catalyses the reaction (2R,3R)-2,3-dihydroxy-3-methylpentanoate + NADP(+) = (S)-2-ethyl-2-hydroxy-3-oxobutanoate + NADPH + H(+). The protein operates within amino-acid biosynthesis; L-isoleucine biosynthesis; L-isoleucine from 2-oxobutanoate: step 2/4. It functions in the pathway amino-acid biosynthesis; L-valine biosynthesis; L-valine from pyruvate: step 2/4. Its function is as follows. Involved in the biosynthesis of branched-chain amino acids (BCAA). Catalyzes an alkyl-migration followed by a ketol-acid reduction of (S)-2-acetolactate (S2AL) to yield (R)-2,3-dihydroxy-isovalerate. In the isomerase reaction, S2AL is rearranged via a Mg-dependent methyl migration to produce 3-hydroxy-3-methyl-2-ketobutyrate (HMKB). In the reductase reaction, this 2-ketoacid undergoes a metal-dependent reduction by NADPH to yield (R)-2,3-dihydroxy-isovalerate. The polypeptide is Ketol-acid reductoisomerase (NADP(+)) (Gloeobacter violaceus (strain ATCC 29082 / PCC 7421)).